Consider the following 84-residue polypeptide: U8-theraphotoxin-Hhn1c 2 (84 aa).

The first 21 residues, 1–21 (MKVVLLVCLVWMMAMMELVSC), serve as a signal peptide directing secretion. Intrachain disulfides connect C23/C35, C29/C44, C34/C67, C54/C75, and C69/C81.

It belongs to the AVIT (prokineticin) family. In terms of tissue distribution, expressed by the venom gland.

Its subcellular location is the secreted. The sequence is that of U8-theraphotoxin-Hhn1c 2 from Cyriopagopus hainanus (Chinese bird spider).